Here is a 124-residue protein sequence, read N- to C-terminus: Large ribosomal subunit protein bL12 (124 aa).

Residues 94–124 are disordered; that stretch reads APKPVKESVPKAAAEEAKKKLEEAGAKAEIK.

The protein belongs to the bacterial ribosomal protein bL12 family. As to quaternary structure, homodimer. Part of the ribosomal stalk of the 50S ribosomal subunit. Forms a multimeric L10(L12)X complex, where L10 forms an elongated spine to which 2 to 4 L12 dimers bind in a sequential fashion. Binds GTP-bound translation factors.

Its function is as follows. Forms part of the ribosomal stalk which helps the ribosome interact with GTP-bound translation factors. Is thus essential for accurate translation. In Paraburkholderia phytofirmans (strain DSM 17436 / LMG 22146 / PsJN) (Burkholderia phytofirmans), this protein is Large ribosomal subunit protein bL12.